The following is a 184-amino-acid chain: Isopentenyl-diphosphate Delta-isomerase (184 aa).

Positions 26 and 33 each coordinate Mn(2+). The Nudix hydrolase domain maps to 31–165; it reads PLHLAFSCYL…PSAFSPWLGL (135 aa). Residue Cys68 is part of the active site. His70 contributes to the Mn(2+) binding site. Glu88 is a Mg(2+) binding site. Glu115 and Glu117 together coordinate Mn(2+). The active site involves Glu117.

This sequence belongs to the IPP isomerase type 1 family. Requires Mg(2+) as cofactor. It depends on Mn(2+) as a cofactor.

The protein localises to the cytoplasm. It catalyses the reaction isopentenyl diphosphate = dimethylallyl diphosphate. The protein operates within isoprenoid biosynthesis; dimethylallyl diphosphate biosynthesis; dimethylallyl diphosphate from isopentenyl diphosphate: step 1/1. In terms of biological role, catalyzes the 1,3-allylic rearrangement of the homoallylic substrate isopentenyl (IPP) to its highly electrophilic allylic isomer, dimethylallyl diphosphate (DMAPP). In Paenarthrobacter aurescens (strain TC1), this protein is Isopentenyl-diphosphate Delta-isomerase.